The following is a 301-amino-acid chain: Nucleotide-binding protein Mb1456 (301 aa).

Position 24 to 31 (24 to 31 (GLSGAGRG)) interacts with ATP. Residue 75–78 (DVRS) coordinates GTP.

Belongs to the RapZ-like family.

Its function is as follows. Displays ATPase and GTPase activities. The protein is Nucleotide-binding protein Mb1456 of Mycobacterium bovis (strain ATCC BAA-935 / AF2122/97).